The following is a 574-amino-acid chain: Urease subunit alpha (574 aa).

The region spanning 131–574 (GAIDSHIHFI…LPMAQRYLLI (444 aa)) is the Urease domain. Ni(2+) contacts are provided by H136, H138, and K219. N6-carboxylysine is present on K219. H221 provides a ligand contact to substrate. Residues H248 and H274 each coordinate Ni(2+). H322 acts as the Proton donor in catalysis. Ni(2+) is bound at residue D362.

This sequence belongs to the metallo-dependent hydrolases superfamily. Urease alpha subunit family. As to quaternary structure, heterotrimer of UreA (gamma), UreB (beta) and UreC (alpha) subunits. Three heterotrimers associate to form the active enzyme. Requires Ni cation as cofactor. In terms of processing, carboxylation allows a single lysine to coordinate two nickel ions.

It is found in the cytoplasm. The enzyme catalyses urea + 2 H2O + H(+) = hydrogencarbonate + 2 NH4(+). The protein operates within nitrogen metabolism; urea degradation; CO(2) and NH(3) from urea (urease route): step 1/1. The sequence is that of Urease subunit alpha from Prochlorococcus marinus (strain MIT 9303).